We begin with the raw amino-acid sequence, 381 residues long: Adenylate cyclase (381 aa).

The tract at residues 1 to 30 (MTVDDTGSGADGDGRVDPEPAPDSADPGED) is disordered. The Guanylate cyclase domain maps to 191–300 (AVGFADLVGF…TTVNLASRLT (110 aa)). The Mg(2+) site is built by Asp196 and Asp240.

Belongs to the adenylyl cyclase class-3 family. It depends on Mg(2+) as a cofactor.

The catalysed reaction is ATP = 3',5'-cyclic AMP + diphosphate. This chain is Adenylate cyclase (cya), found in Streptomyces coelicolor (strain ATCC BAA-471 / A3(2) / M145).